The sequence spans 593 residues: F-box/LRR-repeat protein 17 (593 aa).

One can recognise an F-box domain in the interval 120–177 (DLDLQLDTDIVQPGRFHAVGLWEVLKRLPPSSLLMAARVCKGWRETSRKMWKAAEELR). 9 LRR repeats span residues 178-206 (IRVP…SLKI), 207-232 (ESDF…EITT), 237-262 (VNRI…KMEG), 276-304 (LSTL…SLEF), 335-361 (SLKL…SLVL), 362-387 (GINI…DLSG), 414-439 (CPNI…DCGM), 477-502 (LSLW…NLNL), and 503-525 (CSNL…YASG).

Part of a SCF (ASK-cullin-F-box) protein ligase complex. Interacts with SKP1A/ASK1, KRP4, KRP6 and KRP7. Expressed in developing pollen.

The protein localises to the nucleus. The protein operates within protein modification; protein ubiquitination. In terms of biological role, essential protein for male fertility. Component of the SCF(ASK-cullin-F-box) E3 ubiquitin ligase complex SCF(FBL17), which mediates the ubiquitination and subsequent proteasomal degradation of target proteins. Enables the switch in cell cycle control leading to male germ cell lineage formation from microspores after meiosis. Targets CDKA-1 inhibitors the degradation specifically in male germ cells (e.g. KRP6 and KRP7) and thus enables CDKA-1 activation and germ cell S-phase progression. Promotes twin sperm cell production and double fertilization. This Arabidopsis thaliana (Mouse-ear cress) protein is F-box/LRR-repeat protein 17 (FBL17).